The sequence spans 394 residues: Tryptophan synthase beta chain (394 aa).

An N6-(pyridoxal phosphate)lysine modification is found at lysine 90.

This sequence belongs to the TrpB family. Tetramer of two alpha and two beta chains. Pyridoxal 5'-phosphate serves as cofactor.

It carries out the reaction (1S,2R)-1-C-(indol-3-yl)glycerol 3-phosphate + L-serine = D-glyceraldehyde 3-phosphate + L-tryptophan + H2O. It functions in the pathway amino-acid biosynthesis; L-tryptophan biosynthesis; L-tryptophan from chorismate: step 5/5. Its function is as follows. The beta subunit is responsible for the synthesis of L-tryptophan from indole and L-serine. The chain is Tryptophan synthase beta chain from Parabacteroides distasonis (strain ATCC 8503 / DSM 20701 / CIP 104284 / JCM 5825 / NCTC 11152).